Here is a 232-residue protein sequence, read N- to C-terminus: Ion-translocating oxidoreductase complex subunit E (232 aa).

The next 6 membrane-spanning stretches (helical) occupy residues 18–38 (GLVQ…LTNA), 39–59 (LGLG…VSLV), 69–89 (IPVF…LINA), 93–113 (GLYL…IIIG), 127–147 (AAFD…VLGA), and 182–202 (PFLL…LIAL).

This sequence belongs to the NqrDE/RnfAE family. As to quaternary structure, the complex is composed of six subunits: RnfA, RnfB, RnfC, RnfD, RnfE and RnfG.

Its subcellular location is the cell inner membrane. In terms of biological role, part of a membrane-bound complex that couples electron transfer with translocation of ions across the membrane. The sequence is that of Ion-translocating oxidoreductase complex subunit E from Shewanella sp. (strain MR-4).